A 1883-amino-acid polypeptide reads, in one-letter code: MEDAQEQRESSQAELAKKHPLTPLKELPEESEEEEEEEDESSAGALRESDSNNSIMGKMKMRVSSILPASLSGWFSPSSKDGNDALSSPANLRQSQPRQSNGRLTTKRKRGRRRIMLAEVDADAADDLDDGSDAKGLNYEEVALADNIAEHDLAAEDEQTRRSEYNVFLLRKRAGAVAAAGGDEDEAEEDELEEDDEDGDEEDDDEEQENLQQSAAVQTKRRRLELETPVNLPNMRRLPLLSSTPAAPLAAATSSSSSQMYKGVSHIAPHRRNHLNLYGSQRQREPAYNFFTGNEAAEGSTGDLPHSIRRSLNIPFGGSSTATSYNNSLSSLPNHKRPSLIGKQTHRRDLTMDETGTGPAMSSEEHLNHLLRISRTNNNTSNNNNNNNNNNNVIETKTRRSELSAAAGGCGDSQSESDMNEYHDNGEGHDGLRPSHYNSNSNLEFYGNLQSSKSIFNRSNTAAQQSHRNSTWSLNSLTQRRRFNASIYGSTSALSDSRLLSGSASNSGSASASSSPFYQGRTTFGGNSGNNRLFSRSNLSSSAASSMLGLNSAGSSPAHQLHASMTGGIGYGMKAVDMRPSDSGSLAETSVGQGGSKKPGTGLSNTTMRILNLLESYSTPLIDAKRMGSSIKEHQSSRQQRQGTPATPYLRSTSASRNVSVPNHINELAELRSNKLLVPTMQQLLERRRLHRVTQNSRDVVHSQNVRAGGENNQEKPKPTAPYVAPIDQSANHTQHTNKMRSRLSHQTRNKETRTAEEEAPPPLDLPQISFPDMASAPKFDLIIKPTVPVVSKPSTTDPIQSSKSSNTNLSTTNSKQMPNFLANPQPAAPIVNFAANGNVSAISKPSKRTFTFSEPTPLSNFQENCIPKPKINRKYTFSAPAPLDDLRITNKQSQPTINGTPSSKEWECDTCMVRNKPEINKCVACETAKPVASAAPVQAPLPPSTAAIDTQSFVGFGDRFKKSTTAWECDACMLSNKAEASKCIACETPRKTVAPKVNNFSPLITNAKSNEWECSVCLVRNKVEVSKCVACESAKPGATMALPATSNIAVATPSIITDGFGDRFKKSATAWECDACMLSNKAEASKCIACETPRKSSTPIANSSYPSINNNLPAGSGFDISFTRKANMWECQTCLVMNKSSDEECIACQTPNSQARNSNSESALISSISSSSASFSGSLSRPSSRSSSGSTSTCGSVCSGSIVSISSTTESAKALSAKKVPPKPDAGFQQLVAAQKTSTWECEACLAKNDMSRKTCICCEQMMPEAFNPAATTANSAASSVPKFRFGFSHVKEVVKPSVETTTTPAPTSAQFSFGFGQSNQGKDVADSKKTEAPKTFMFGVSKVEEPKTVSFGTGIKETTATSSTEATAPTPAAAAPAPVQFVFKAPTTATTASSLTTTISTTSNAPALGGFSFGAPSSSSTVSSSTTSTSANPAAVKPMFSWSGAGSAVSSTSSSQQPVAKAPTLGFGVSSSTVTTTTTSTKVFAFTPASGLDPAAATSAPAAGAGFSFGSQSKPATTQNTGTFFFGQPTAVAPATPTNPSVSSIFGAPATSTTASTSVSATTSTSTANAIASSFAPTSTPQLFGNWGEKKTDLTTFGASSGSGTTTTPSFGWSSNGDAAKSNSAAVGSAAVPSSSASTMATPIFGSSSMFGPSSSSNNTTSTSTTSLPFGSAATTAATTPAGGNAALTGLFGNVGNSLAGVGAPVATTPAATAAAPLTNIFGNPTPVAAAAPVFGSGSTIPSAGFGAPAAAAPLAAPALPGAFNFGGATAATPAASSAPFVFGSSTNEPLAKPSFNFTGSAASSTAPAPAFNFTANTAATNNPSGGDSTPNANALFQFSATSTAPANIFAFNPPAAGNSAQSSQTARRKIRAPVRRLPPR.

The span at 1-17 (MEDAQEQRESSQAELAK) shows a compositional bias: basic and acidic residues. Disordered regions lie at residues 1–57 (MEDA…SIMG), 70–116 (SLSG…RRIM), 176–227 (AVAA…LELE), 400–439 (RSEL…HYNS), 498–518 (RLLS…SPFY), 580–604 (PSDS…TGLS), 627–657 (MGSS…SASR), 694–769 (TQNS…LPQI), and 791–812 (VSKP…NLST). A compositionally biased stretch (acidic residues) spans 29-41 (EESEEEEEEEDES). Residues 73–101 (GWFSPSSKDGNDALSSPANLRQSQPRQSN) are compositionally biased toward polar residues. The span at 105 to 115 (TTKRKRGRRRI) shows a compositional bias: basic residues. Residues 182–209 (GDEDEAEEDELEEDDEDGDEEDDDEEQE) are compositionally biased toward acidic residues. Basic and acidic residues predominate over residues 420-433 (NEYHDNGEGHDGLR). Positions 498–515 (RLLSGSASNSGSASASSS) are enriched in low complexity. Residues 582–591 (DSGSLAETSV) are compositionally biased toward polar residues. A compositionally biased stretch (basic and acidic residues) spans 627–636 (MGSSIKEHQS). Polar residues-rich tracts occupy residues 637–657 (SRQQ…SASR) and 694–706 (TQNS…SQNV). A compositionally biased stretch (basic residues) spans 736–748 (HTNKMRSRLSHQT). Residues 802–812 (SSKSSNTNLST) are compositionally biased toward low complexity. 5 RanBP2-type zinc fingers span residues 903–932 (SSKE…AKPV), 962–993 (KKST…PRKT), 1009–1038 (KSNE…AKPG), 1067–1097 (KSAT…PRKS), and 1126–1155 (KANM…PNSQ). Zn(2+)-binding residues include Cys-909, Cys-912, Cys-923, Cys-926, Cys-970, Cys-973, Cys-984, Cys-987, Cys-1015, Cys-1018, Cys-1029, Cys-1032, Cys-1074, Cys-1077, Cys-1088, and Cys-1091. Residues 1173–1197 (SASFSGSLSRPSSRSSSGSTSTCGS) form a disordered region. Residues 1237–1266 (KTSTWECEACLAKNDMSRKTCICCEQMMPE) form a RanBP2-type 6 zinc finger. 22 repeat units span residues 1287 to 1288 (FG), 1315 to 1316 (FG), 1317 to 1318 (FG), 1340 to 1341 (FG), 1353 to 1354 (FG), 1415 to 1416 (FG), 1469 to 1470 (FG), 1511 to 1512 (FG), 1528 to 1529 (FG), 1548 to 1549 (FG), 1586 to 1587 (FG), 1599 to 1600 (FG), 1613 to 1614 (FG), 1647 to 1648 (FG), 1653 to 1654 (FG), 1672 to 1673 (FG), 1694 to 1695 (FG), 1724 to 1725 (FG), 1737 to 1738 (FG), 1748 to 1749 (FG), 1768 to 1769 (FG), and 1785 to 1786 (FG). The segment at 1287 to 1786 (FGFSHVKEVV…AASSAPFVFG (500 aa)) is 22 X 2 AA repeats of F-G. The span at 1301–1323 (ETTTTPAPTSAQFSFGFGQSNQG) shows a compositional bias: polar residues. The tract at residues 1301–1331 (ETTTTPAPTSAQFSFGFGQSNQGKDVADSKK) is disordered. The disordered stretch occupies residues 1449 to 1473 (SAVSSTSSSQQPVAKAPTLGFGVSS). Residues 1597–1616 (TTFGASSGSGTTTTPSFGWS) form a disordered region. Positions 1855 to 1883 (NPPAAGNSAQSSQTARRKIRAPVRRLPPR) are disordered. The segment covering 1869-1883 (ARRKIRAPVRRLPPR) has biased composition (basic residues).

Belongs to the NUP153 family. Part of the nuclear pore complex (NPC). Associates with male-specific lethal (MSL) histone acetyltransferase complex. The cofactor is Zn(2+). Expressed in adult male accessory glands (at protein level).

Its subcellular location is the nucleus. The protein resides in the nucleus membrane. It localises to the nuclear pore complex. The protein localises to the chromosome. It is found in the cytoplasm. Its subcellular location is the cytoskeleton. The protein resides in the spindle. Functionally, component of the nuclear pore complex (NPC), a complex required for the trafficking across the nuclear envelope. Functions as a scaffolding element in the nuclear phase of the NPC. Essential for the nuclear import of nuclear localization signal (NLS)-containing proteins in a Importin alpha/Importin beta receptor-dependent manner. Required for nuclear import of Mad. Plays a role in chromosomal organization and gene expression regulation; stimulates transcription by promoting the formation of an open chromatin environment. Binds chromatin to nucleoporin-associated regions (NARs) that define transcriptionally active regions of the genome. Associates with extended chromosomal regions that alternate between domains of high density binding with those of low occupancy. Preferentially binds to NARs of the male X chromosome. In males, together with Mgtor, required for the localization of the male-specific lethal (MSL) histone acetyltransferase complex to the X chromosome and therefore for the transcription of dosage compensation genes. May play a role in double strand break DNA repair. In Drosophila melanogaster (Fruit fly), this protein is Nuclear pore complex protein Nup153 (Nup153).